The following is a 410-amino-acid chain: Serine hydroxymethyltransferase (410 aa).

(6S)-5,6,7,8-tetrahydrofolate contacts are provided by residues Leu-119 and 123–125; that span reads GHL. N6-(pyridoxal phosphate)lysine is present on Lys-228. 351 to 353 lines the (6S)-5,6,7,8-tetrahydrofolate pocket; it reads SPF.

The protein belongs to the SHMT family. In terms of assembly, homodimer. It depends on pyridoxal 5'-phosphate as a cofactor.

Its subcellular location is the cytoplasm. It catalyses the reaction (6R)-5,10-methylene-5,6,7,8-tetrahydrofolate + glycine + H2O = (6S)-5,6,7,8-tetrahydrofolate + L-serine. It participates in one-carbon metabolism; tetrahydrofolate interconversion. The protein operates within amino-acid biosynthesis; glycine biosynthesis; glycine from L-serine: step 1/1. Catalyzes the reversible interconversion of serine and glycine with tetrahydrofolate (THF) serving as the one-carbon carrier. This reaction serves as the major source of one-carbon groups required for the biosynthesis of purines, thymidylate, methionine, and other important biomolecules. Also exhibits THF-independent aldolase activity toward beta-hydroxyamino acids, producing glycine and aldehydes, via a retro-aldol mechanism. The protein is Serine hydroxymethyltransferase of Clostridium perfringens (strain ATCC 13124 / DSM 756 / JCM 1290 / NCIMB 6125 / NCTC 8237 / Type A).